We begin with the raw amino-acid sequence, 435 residues long: Enolase (435 aa).

Glutamine 163 is a (2R)-2-phosphoglycerate binding site. Glutamate 205 functions as the Proton donor in the catalytic mechanism. Residues aspartate 243, glutamate 292, and aspartate 319 each coordinate Mg(2+). Residues lysine 344, arginine 373, serine 374, and lysine 395 each contribute to the (2R)-2-phosphoglycerate site. Residue lysine 344 is the Proton acceptor of the active site.

This sequence belongs to the enolase family. Requires Mg(2+) as cofactor.

It is found in the cytoplasm. It localises to the secreted. Its subcellular location is the cell surface. The catalysed reaction is (2R)-2-phosphoglycerate = phosphoenolpyruvate + H2O. Its pathway is carbohydrate degradation; glycolysis; pyruvate from D-glyceraldehyde 3-phosphate: step 4/5. Functionally, catalyzes the reversible conversion of 2-phosphoglycerate (2-PG) into phosphoenolpyruvate (PEP). It is essential for the degradation of carbohydrates via glycolysis. This is Enolase from Streptococcus agalactiae serotype Ia (strain ATCC 27591 / A909 / CDC SS700).